The following is a 432-amino-acid chain: Trigger factor (432 aa).

The region spanning glutamate 161–proline 246 is the PPIase FKBP-type domain.

Belongs to the FKBP-type PPIase family. Tig subfamily.

Its subcellular location is the cytoplasm. It catalyses the reaction [protein]-peptidylproline (omega=180) = [protein]-peptidylproline (omega=0). Functionally, involved in protein export. Acts as a chaperone by maintaining the newly synthesized protein in an open conformation. Functions as a peptidyl-prolyl cis-trans isomerase. This Klebsiella pneumoniae (strain 342) protein is Trigger factor.